We begin with the raw amino-acid sequence, 177 residues long: Large ribosomal subunit protein uL6 (177 aa).

It belongs to the universal ribosomal protein uL6 family. As to quaternary structure, part of the 50S ribosomal subunit.

Its function is as follows. This protein binds to the 23S rRNA, and is important in its secondary structure. It is located near the subunit interface in the base of the L7/L12 stalk, and near the tRNA binding site of the peptidyltransferase center. The polypeptide is Large ribosomal subunit protein uL6 (Pseudomonas fluorescens (strain SBW25)).